A 90-amino-acid polypeptide reads, in one-letter code: UPF0223 protein LMHCC_1569 (90 aa).

The protein belongs to the UPF0223 family.

This is UPF0223 protein LMHCC_1569 from Listeria monocytogenes serotype 4a (strain HCC23).